A 239-amino-acid chain; its full sequence is Purine nucleoside phosphorylase DeoD-type (239 aa).

Position 5 (H5) interacts with a purine D-ribonucleoside. Residues G21 and R25 each contribute to the phosphate site. An N6-acetyllysine modification is found at K27. Residues R44 and R88–S91 each bind phosphate. A purine D-ribonucleoside-binding positions include E180 to E182 and S204 to D205. D205 (proton donor) is an active-site residue.

This sequence belongs to the PNP/UDP phosphorylase family. As to quaternary structure, homohexamer; trimer of homodimers.

The enzyme catalyses a purine D-ribonucleoside + phosphate = a purine nucleobase + alpha-D-ribose 1-phosphate. It catalyses the reaction a purine 2'-deoxy-D-ribonucleoside + phosphate = a purine nucleobase + 2-deoxy-alpha-D-ribose 1-phosphate. In terms of biological role, catalyzes the reversible phosphorolytic breakdown of the N-glycosidic bond in the beta-(deoxy)ribonucleoside molecules, with the formation of the corresponding free purine bases and pentose-1-phosphate. The polypeptide is Purine nucleoside phosphorylase DeoD-type (Escherichia coli O81 (strain ED1a)).